The chain runs to 175 residues: Bifunctional protein PyrR (175 aa).

Substrate contacts are provided by residues 40 to 41 (TR), 102 to 110 (DDVLYTGRT), R135, and V159. A PRPP-binding motif is present at residues 98-110 (VIIIDDVLYTGRT).

It belongs to the purine/pyrimidine phosphoribosyltransferase family. PyrR subfamily. As to quaternary structure, homodimer and homohexamer; in equilibrium.

It catalyses the reaction UMP + diphosphate = 5-phospho-alpha-D-ribose 1-diphosphate + uracil. Regulates transcriptional attenuation of the pyrimidine nucleotide (pyr) operon by binding in a uridine-dependent manner to specific sites on pyr mRNA. This disrupts an antiterminator hairpin in the RNA and favors formation of a downstream transcription terminator, leading to a reduced expression of downstream genes. In terms of biological role, also displays a weak uracil phosphoribosyltransferase activity which is not physiologically significant. The chain is Bifunctional protein PyrR from Staphylococcus aureus (strain MSSA476).